Here is a 216-residue protein sequence, read N- to C-terminus: MRLKPHEAQSYRKKALWVSWISIVVTLILAVAGFTVSFMRHSASAFGFAFDATLDVLSSIIVLWRYSNAAAVHSAHREYIACVILGVIFILSSLCILGKAIHDLATKLLPEVDDFLFSVSIVSGLMCVILAVAKFMLGRILTSRALITDGFNSMVGGIMGFSILISAEVFRHYPNVWYLDGTIGILIGLVIQAYGVKLLVDMIPRVRQTRNYERFE.

The Cytoplasmic segment spans residues 1–15 (MRLKPHEAQSYRKKA). Residues 16–36 (LWVSWISIVVTLILAVAGFTV) traverse the membrane as a helical segment. The Extracellular segment spans residues 37-43 (SFMRHSA). Residues 44–64 (SAFGFAFDATLDVLSSIIVLW) form a helical membrane-spanning segment. Topologically, residues 65–77 (RYSNAAAVHSAHR) are cytoplasmic. A helical transmembrane segment spans residues 78-98 (EYIACVILGVIFILSSLCILG). The Extracellular portion of the chain corresponds to 99–114 (KAIHDLATKLLPEVDD). A helical membrane pass occupies residues 115-135 (FLFSVSIVSGLMCVILAVAKF). Residues 136-144 (MLGRILTSR) lie on the Cytoplasmic side of the membrane. A helical membrane pass occupies residues 145–165 (ALITDGFNSMVGGIMGFSILI). Residues 166–182 (SAEVFRHYPNVWYLDGT) lie on the Extracellular side of the membrane. Residues 183 to 203 (IGILIGLVIQAYGVKLLVDMI) traverse the membrane as a helical segment. At 204–216 (PRVRQTRNYERFE) the chain is on the cytoplasmic side.

It belongs to the TMEM163 family.

It localises to the cytoplasmic vesicle. The protein localises to the secretory vesicle. The protein resides in the synaptic vesicle membrane. Its subcellular location is the early endosome membrane. It is found in the late endosome membrane. It localises to the lysosome membrane. The protein localises to the cell membrane. It carries out the reaction Zn(2+)(in) = Zn(2+)(out). In terms of biological role, zinc ion transporter that mediates zinc efflux and plays a crucial role in intracellular zinc homeostasis. Binds the divalent cations Zn(2+), Ni(2+), and to a minor extent Cu(2+). Is a functional modulator of P2X purinoceptors, including P2RX1, P2RX3, P2RX4 and P2RX7. Plays a role in central nervous system development and is required for myelination, and survival and proliferation of oligodendrocytes. The sequence is that of Transmembrane protein 163a from Danio rerio (Zebrafish).